Here is a 474-residue protein sequence, read N- to C-terminus: Isoflavone 7-O-glucosyltransferase 1 (474 aa).

The propeptide at 1–49 (MKDTIVLYPNLGRGHLVSMVELGKLILTHHPSLSITILILTPPTTPSTT) is removed in mature form. The Proton acceptor role is filled by His-15. His-15 provides a ligand contact to an anthocyanidin. Catalysis depends on Asp-125, which acts as the Charge relay. Residues Thr-150, Ala-351, Gln-353, His-368, Trp-371, Asn-372, Ser-373, and Glu-376 each contribute to the UDP-alpha-D-glucose site. Ala-391 contributes to the an anthocyanidin binding site. Positions 392 and 393 each coordinate UDP-alpha-D-glucose.

It belongs to the UDP-glycosyltransferase family. In terms of assembly, monomer. Expressed in shoots, leaves, cotyledons, epicotyls, hypocotyls, roots, pods, seeds and flowers.

The enzyme catalyses a 7-hydroxyisoflavone + UDP-alpha-D-glucose = a 7-hydroxyisoflavone 7-O-beta-D-glucoside + UDP + H(+). In terms of biological role, involved in the biosynthesis of isoflavonoids. Specific for UDP-glucose. Can use genistein &gt; daidzein &gt; formononetin &gt; quercetin &gt; kaempferol &gt; 4,2',4',6'-tetrahydroxychalcone &gt; apigenin &gt; aureusidin &gt; esculetin &gt; naringenin as substrates, but not cyanidin, trans-p-coumaric acid, caffeic acid, benzoic acid, m- and p-hydroxybenzoic acids, salicylic acid, salicyl alcohol, and hydroquinone. This chain is Isoflavone 7-O-glucosyltransferase 1 (GmIF7GT1), found in Glycine max (Soybean).